The following is a 196-amino-acid chain: Dehydrogenase RED3 (196 aa).

S47, D74, N101, R134, Y166, and K170 together coordinate NADP(+). The Proton acceptor role is filled by Y166. The Lowers pKa of active site Tyr role is filled by K170.

It belongs to the short-chain dehydrogenases/reductases (SDR) family.

It carries out the reaction a primary alcohol + NAD(+) = an aldehyde + NADH + H(+). It catalyses the reaction a secondary alcohol + NAD(+) = a ketone + NADH + H(+). It participates in mycotoxin biosynthesis. Its function is as follows. Dehydrogenase; part of the Tox1B locus, one of the 2 loci that mediate the biosynthesis of T-toxin, a family of linear polyketides 37 to 45 carbons in length, of which the major component is 41 carbons, and which leads to high virulence to maize. One of the PKSs (PKS1 or PKS2) could synthesize a precursor, used subsequently by the other PKS as starter unit, to add additional carbons. Variability in the length of the final carbon backbone C35-47 could be achieved by varying the number of condensation cycles, or use of different starter or extender units or might be due to decarboxylation of the penultimate product, catalyzed by DEC1. Additional proteins are required for the biosynthesis of T-toxin, including oxidoreductases RED1, RED2, RED3, LAM1 and OXI1, as well as esterase TOX9. This chain is Dehydrogenase RED3, found in Cochliobolus heterostrophus (strain C4 / ATCC 48331 / race T) (Southern corn leaf blight fungus).